We begin with the raw amino-acid sequence, 455 residues long: Kynurenine--oxoglutarate transaminase 3 (455 aa).

G71 is a binding site for substrate. At K116 the chain carries N6-acetyllysine; alternate. The residue at position 116 (K116) is an N6-succinyllysine; alternate. Residue N218 participates in substrate binding. The residue at position 280 (K280) is an N6-(pyridoxal phosphate)lysine. R430 contributes to the substrate binding site.

It belongs to the class-I pyridoxal-phosphate-dependent aminotransferase family. As to quaternary structure, homodimer. Requires pyridoxal 5'-phosphate as cofactor.

The catalysed reaction is L-kynurenine + 2-oxoglutarate = kynurenate + L-glutamate + H2O. The enzyme catalyses L-kynurenine + glyoxylate = kynurenate + glycine + H2O. It carries out the reaction 3-hydroxy-L-kynurenine + glyoxylate = xanthurenate + glycine + H2O. It catalyses the reaction an S-substituted L-cysteine + H2O = a thiol + pyruvate + NH4(+). It functions in the pathway amino-acid degradation; L-kynurenine degradation; kynurenate from L-kynurenine: step 1/2. Its function is as follows. Catalyzes the irreversible transamination of the L-tryptophan metabolite L-kynurenine to form kynurenic acid (KA), an intermediate in the tryptophan catabolic pathway which is also a broad spectrum antagonist of the three ionotropic excitatory amino acid receptors among others. May catalyze the beta-elimination of S-conjugates and Se-conjugates of L-(seleno)cysteine, resulting in the cleavage of the C-S or C-Se bond. Has transaminase activity towards L-kynurenine, tryptophan, phenylalanine, serine, cysteine, methionine, histidine, glutamine and asparagine with glyoxylate as an amino group acceptor (in vitro). Has lower activity with 2-oxoglutarate as amino group acceptor (in vitro). This is Kynurenine--oxoglutarate transaminase 3 from Bos taurus (Bovine).